The primary structure comprises 305 residues: Probable 5-dehydro-4-deoxyglucarate dehydratase (305 aa).

The protein belongs to the DapA family.

The enzyme catalyses 5-dehydro-4-deoxy-D-glucarate + H(+) = 2,5-dioxopentanoate + CO2 + H2O. It participates in carbohydrate acid metabolism; D-glucarate degradation; 2,5-dioxopentanoate from D-glucarate: step 2/2. The polypeptide is Probable 5-dehydro-4-deoxyglucarate dehydratase (Pseudomonas entomophila (strain L48)).